We begin with the raw amino-acid sequence, 485 residues long: UDP-N-acetylmuramate--L-alanine ligase (485 aa).

120 to 126 contributes to the ATP binding site; that stretch reads GSHGKTT.

The protein belongs to the MurCDEF family.

It is found in the cytoplasm. It catalyses the reaction UDP-N-acetyl-alpha-D-muramate + L-alanine + ATP = UDP-N-acetyl-alpha-D-muramoyl-L-alanine + ADP + phosphate + H(+). It participates in cell wall biogenesis; peptidoglycan biosynthesis. Its function is as follows. Cell wall formation. In Rickettsia massiliae (strain Mtu5), this protein is UDP-N-acetylmuramate--L-alanine ligase.